We begin with the raw amino-acid sequence, 191 residues long: Inosine triphosphate pyrophosphatase (191 aa).

15 to 20 serves as a coordination point for ITP; sequence TGNANK. E43 lines the Mg(2+) pocket. ITP-binding positions include K55, 71 to 72, K88, 147 to 150, K168, and 173 to 174; these read DT, FGWD, and HR.

It belongs to the HAM1 NTPase family. As to quaternary structure, homodimer. Mg(2+) serves as cofactor. Requires Mn(2+) as cofactor.

The protein resides in the cytoplasm. The protein localises to the nucleus. It carries out the reaction ITP + H2O = IMP + diphosphate + H(+). It catalyses the reaction dITP + H2O = dIMP + diphosphate + H(+). The enzyme catalyses XTP + H2O = XMP + diphosphate + H(+). In terms of biological role, pyrophosphatase that hydrolyzes non-canonical purine nucleotides such as inosine triphosphate (ITP), deoxyinosine triphosphate (dITP) or xanthosine 5'-triphosphate (XTP) to their respective monophosphate derivatives. The enzyme does not distinguish between the deoxy- and ribose forms. Probably excludes non-canonical purines from RNA and DNA precursor pools, thus preventing their incorporation into RNA and DNA and avoiding chromosomal lesions. The chain is Inosine triphosphate pyrophosphatase from Neurospora crassa (strain ATCC 24698 / 74-OR23-1A / CBS 708.71 / DSM 1257 / FGSC 987).